Here is a 103-residue protein sequence, read N- to C-terminus: UPF0145 protein PERMA_0324 (103 aa).

The protein belongs to the UPF0145 family.

This Persephonella marina (strain DSM 14350 / EX-H1) protein is UPF0145 protein PERMA_0324.